We begin with the raw amino-acid sequence, 120 residues long: Immunoglobulin kappa variable 2D-26 (120 aa).

The signal sequence occupies residues 1-20 (MRLPAQLLGLLMLWVPGSSA). The segment at 21–43 (EIVMTQTPLSLSITPGEQASMSC) is framework-1. The region spanning 21–120 (EIVMTQTPLS…YYCMQDAQDP (100 aa)) is the Ig-like domain. Cys-43 and Cys-113 are disulfide-bonded. A complementarity-determining-1 region spans residues 44–59 (RSSQSLLHSDGYTYLY). A framework-2 region spans residues 60 to 74 (WFLQKARPVSTLLIY). The complementarity-determining-2 stretch occupies residues 75-81 (EVSNRFS). Residues 82–113 (GVPDRFSGSGSGTDFTLKISRVEAEDFGVYYC) form a framework-3 region. Positions 114-120 (MQDAQDP) are complementarity-determining-3.

Immunoglobulins are composed of two identical heavy chains and two identical light chains; disulfide-linked.

It is found in the secreted. Its subcellular location is the cell membrane. Functionally, v region of the variable domain of immunoglobulin light chains that participates in the antigen recognition. Immunoglobulins, also known as antibodies, are membrane-bound or secreted glycoproteins produced by B lymphocytes. In the recognition phase of humoral immunity, the membrane-bound immunoglobulins serve as receptors which, upon binding of a specific antigen, trigger the clonal expansion and differentiation of B lymphocytes into immunoglobulins-secreting plasma cells. Secreted immunoglobulins mediate the effector phase of humoral immunity, which results in the elimination of bound antigens. The antigen binding site is formed by the variable domain of one heavy chain, together with that of its associated light chain. Thus, each immunoglobulin has two antigen binding sites with remarkable affinity for a particular antigen. The variable domains are assembled by a process called V-(D)-J rearrangement and can then be subjected to somatic hypermutations which, after exposure to antigen and selection, allow affinity maturation for a particular antigen. In Homo sapiens (Human), this protein is Immunoglobulin kappa variable 2D-26.